A 195-amino-acid polypeptide reads, in one-letter code: MKAFVASGLLLLIFGMWRCSGIEPVSMECDYFTFRVIAKRALFYPDDLIGPDELLLGASCPVTSIRPDELEFYYDIHSCGTFIQHAFDGTIVNTWLTYMPRNISIYAELQLQCVIPRISQDELDNKQSSDECVGESESIDVGNLDFHPPPQCWFLVLKRYCIICGHFHFPNNWLIPYHGWKDESFQRLWPSLFHR.

Positions 1-21 (MKAFVASGLLLLIFGMWRCSG) are cleaved as a signal peptide. Asn-102 is a glycosylation site (N-linked (GlcNAc...) asparagine).

This sequence belongs to the PLAC1 family. As to expression, oocyte-specific.

It is found in the secreted. The chain is Oocyte-secreted protein 3 from Mus musculus (Mouse).